The chain runs to 2763 residues: Large tegument protein deneddylase (2763 aa).

Residues Met1–Tyr247 are deubiquitination activity. A Peptidase C76 domain is found at Ala12–Ser237. Active-site residues include Cys32, Asp168, and His170. The segment at Leu495–Ser523 is interaction with inner tegument protein. Tandem repeats lie at residues Pro2455–Gln2457, Pro2458–Gln2460, Pro2461–Gln2463, Pro2464–Gln2466, Pro2467–Gln2469, Pro2470–Gln2472, Pro2473–Gln2475, and Pro2476–Gln2478. The interval Pro2455–Gln2478 is 8 X 3 AA repeats of P-A/V-Q. Residues Asn2630 to Ser2651 are disordered.

Belongs to the herpesviridae large tegument protein family. In terms of assembly, interacts with host CUL1 and CUL4A; these interactions inhibit the E3 ligase activity of cullins. Interacts with inner tegument protein. Interacts with capsid vertex specific component CVC2. Interacts with the major capsid protein/MCP.

Its subcellular location is the virion tegument. The protein resides in the host cytoplasm. It is found in the host nucleus. It catalyses the reaction Thiol-dependent hydrolysis of ester, thioester, amide, peptide and isopeptide bonds formed by the C-terminal Gly of ubiquitin (a 76-residue protein attached to proteins as an intracellular targeting signal).. Functionally, large tegument protein that plays multiple roles in the viral cycle. During viral entry, remains associated with the capsid while most of the tegument is detached and participates in the capsid transport toward the host nucleus. Plays a role in the routing of the capsid at the nuclear pore complex and subsequent uncoating. Within the host nucleus, acts as a deneddylase and promotes the degradation of nuclear CRLs (cullin-RING ubiquitin ligases) and thereby stabilizes nuclear CRL substrates, while cytoplasmic CRLs remain unaffected. These modifications prevent host cell cycle S-phase progression and create a favorable environment allowing efficient viral genome replication. Participates later in the secondary envelopment of capsids. Indeed, plays a linker role for the association of the outer viral tegument to the capsids together with the inner tegument protein. The polypeptide is Large tegument protein deneddylase (Varicella-zoster virus (strain Oka vaccine) (HHV-3)).